Here is a 236-residue protein sequence, read N- to C-terminus: Carbonyl reductase family member 4 (236 aa).

NADP(+) contacts are provided by residues S11–I14, R34–D35, D55, and S82–G84. S134 contributes to the substrate binding site. NADP(+) contacts are provided by residues Y147, K151, and I180–T182. The active-site Proton acceptor is the Y147.

It belongs to the short-chain dehydrogenases/reductases (SDR) family. As to quaternary structure, homotetramer (in vitro). Heterotetramer with HSD17B8; contains two molecules each of HSD17B8 and CBR4.

The protein localises to the mitochondrion matrix. It participates in lipid metabolism; fatty acid biosynthesis. In terms of biological role, the heterotetramer with HSD17B8 has NADH-dependent 3-ketoacyl-acyl carrier protein reductase activity, and thereby plays a role in mitochondrial fatty acid biosynthesis. Within the heterotetramer, HSD17B8 binds NADH; CBR4 binds NADPD. The homotetramer has NADPH-dependent quinone reductase activity. Both homotetramer and the heterotetramer have broad in vitro substrate specificity and can reduce 9,10-phenanthrenequinone, 1,4-benzoquinone and various other o-quinones and p-quinones. This chain is Carbonyl reductase family member 4 (cbr4), found in Xenopus tropicalis (Western clawed frog).